Reading from the N-terminus, the 78-residue chain is Transmembrane protein 258 (78 aa).

The Cytoplasmic segment spans residues 1-18; it reads MDVMQRYVSPVNPAVFPH. Residues 19–39 form a helical membrane-spanning segment; it reads LATVLLVIGTFFTAWFFIFVV. Over 40 to 53 the chain is Cytoplasmic; the sequence is SRKSSKESTLIKEL. Residues 54-74 traverse the membrane as a helical segment; the sequence is LISLCASIFLGFGIVFLLLTV. Residues 75-78 are Perinuclear space-facing; it reads GIYV.

Belongs to the OST5 family. In terms of assembly, homodimer. Component of the oligosaccharyltransferase (OST) complex. Interacts with klar and Msp300, components of LINC complex.

Its subcellular location is the nucleus outer membrane. The protein localises to the cytoplasm. It is found in the endoplasmic reticulum membrane. Its function is as follows. Subunit of the oligosaccharyl transferase (OST) complex that catalyzes the initial transfer of a defined glycan (Glc(3)Man(9)GlcNAc(2) in eukaryotes) from the lipid carrier dolichol-pyrophosphate to an asparagine residue within an Asn-X-Ser/Thr consensus motif in nascent polypeptide chains, the first step in protein N-glycosylation. N-glycosylation occurs cotranslationally and the complex associates with the Sec61 complex at the channel-forming translocon complex that mediates protein translocation across the endoplasmic reticulum (ER). All subunits are required for a maximal enzyme activity. In addition may regulates nuclear envelope (NE) architecture and nuclear positioning through the linker of nucleoskeleton and cytoskeleton (LINC)-dependent and -independent mechanisms. This Drosophila melanogaster (Fruit fly) protein is Transmembrane protein 258.